Here is a 291-residue protein sequence, read N- to C-terminus: Nucleotide-binding protein LMHCC_0126 (291 aa).

ATP is bound at residue 13–20 (GMSGAGKT). 63–66 (DLRG) contacts GTP.

This sequence belongs to the RapZ-like family.

Functionally, displays ATPase and GTPase activities. This Listeria monocytogenes serotype 4a (strain HCC23) protein is Nucleotide-binding protein LMHCC_0126.